A 168-amino-acid chain; its full sequence is MNEVKESLRSIEQKYKLFQQQQFTFIAALEHCRENAHDKIRPISSIEQVQSYMEHYCNNSTHRRILIMFMDICSELSKLCQHFEALHSGTPVTNSLLEKCKTLVSQSNDLSSLRAKYPHEVVNHLSCDEARNHYGGVVSLIPIVLDFMKEWIAHSEKLPRKVLQHGTT.

As to quaternary structure, microtubule inner protein component of sperm flagellar doublet microtubules. Interacts with CABP1 and CALR. Interacts with INCA1. Interacts with microtubules. In terms of tissue distribution, expressed in sperm (at protein level). Expressed from almost all the cell types of testis, with abundant expression in round and elongated spermatids (at protein level). Predominantly expressed in tissues containing motile cilia.

Its subcellular location is the cytoplasm. The protein resides in the cytoplasmic vesicle. It localises to the secretory vesicle. The protein localises to the acrosome. It is found in the cytoskeleton. Its subcellular location is the cilium basal body. The protein resides in the flagellum axoneme. It localises to the cilium axoneme. The protein localises to the nucleus. Microtubule inner protein (MIP) part of the dynein-decorated doublet microtubules (DMTs) of multiciliated respiratory cells and the distal singlet microtubules of monoflagellated spermatozoa. Forms an extensive interaction network cross-linking the lumen of axonemal doublet microtubules. This chain is Sperm acrosome-associated protein 9, found in Mus musculus (Mouse).